The following is a 430-amino-acid chain: Putative glycylpeptide N-tetradecanoyltransferase 2 (430 aa).

Tetradecanoyl-CoA is bound by residues His47–Trp50, Leu181–Val183, and Ser189–Ala193. Leu430 functions as the Proton acceptor; via carboxylate in the catalytic mechanism.

This sequence belongs to the NMT family.

It carries out the reaction N-terminal glycyl-[protein] + tetradecanoyl-CoA = N-tetradecanoylglycyl-[protein] + CoA + H(+). In terms of biological role, may add a myristoyl group to the N-terminal glycine residue of certain cellular proteins. The polypeptide is Putative glycylpeptide N-tetradecanoyltransferase 2 (NMT2) (Arabidopsis thaliana (Mouse-ear cress)).